The sequence spans 494 residues: Histidine--tRNA ligase (494 aa).

It belongs to the class-II aminoacyl-tRNA synthetase family. Homodimer.

It is found in the cytoplasm. It catalyses the reaction tRNA(His) + L-histidine + ATP = L-histidyl-tRNA(His) + AMP + diphosphate + H(+). The sequence is that of Histidine--tRNA ligase from Cereibacter sphaeroides (strain ATCC 17023 / DSM 158 / JCM 6121 / CCUG 31486 / LMG 2827 / NBRC 12203 / NCIMB 8253 / ATH 2.4.1.) (Rhodobacter sphaeroides).